Here is a 386-residue protein sequence, read N- to C-terminus: Lycopene beta-cyclase (386 aa).

Residue 3–33 (DLILVGGGLANGLIAWRLRQRYPQLNLLLIE) coordinates NAD(+).

It belongs to the lycopene cyclase family. The cofactor is FAD.

It carries out the reaction a carotenoid psi-end group = a carotenoid beta-end derivative. The enzyme catalyses all-trans-lycopene = gamma-carotene. The catalysed reaction is gamma-carotene = all-trans-beta-carotene. It functions in the pathway carotenoid biosynthesis; beta-carotene biosynthesis. Functionally, catalyzes the double cyclization reaction which converts lycopene to beta-carotene. The sequence is that of Lycopene beta-cyclase from Pseudescherichia vulneris (Escherichia vulneris).